Consider the following 162-residue polypeptide: Dihydrofolate reductase (162 aa).

The DHFR domain occupies 3-161 (KITLIAACAE…TSYAFVHYLR (159 aa)). 7–9 (IAA) provides a ligand contact to substrate. Residues 8 to 9 (AA) and 16 to 21 (IGAGNA) each bind NADP(+). Asp29 provides a ligand contact to substrate. Residue 45-48 (GRKT) coordinates NADP(+). Arg60 is a substrate binding site. Residues 65–68 (ISRQ) and 98–103 (MGGAQI) contribute to the NADP(+) site. Thr117 is a substrate binding site.

The protein belongs to the dihydrofolate reductase family.

It catalyses the reaction (6S)-5,6,7,8-tetrahydrofolate + NADP(+) = 7,8-dihydrofolate + NADPH + H(+). It participates in cofactor biosynthesis; tetrahydrofolate biosynthesis; 5,6,7,8-tetrahydrofolate from 7,8-dihydrofolate: step 1/1. Its function is as follows. Key enzyme in folate metabolism. Catalyzes an essential reaction for de novo glycine and purine synthesis, and for DNA precursor synthesis. This is Dihydrofolate reductase (folA) from Neisseria meningitidis serogroup A / serotype 4A (strain DSM 15465 / Z2491).